The following is a 155-amino-acid chain: uncharacterized protein (155 aa).

A helical transmembrane segment spans residues 5–25; the sequence is GIIICVGIAFLIFIFLWAYFK.

Its subcellular location is the membrane. This is an uncharacterized protein from Acheta domesticus (House cricket).